The primary structure comprises 115 residues: Non-specific lipid-transfer protein 3 (115 aa).

The signal sequence occupies residues 1–23 (MAFALRFFTCLVLTVCIVASVDA). Intrachain disulfides connect C27/C74, C37/C51, C52/C97, and C72/C111.

This sequence belongs to the plant LTP family.

Its function is as follows. Plant non-specific lipid-transfer proteins transfer phospholipids as well as galactolipids across membranes. May play a role in wax or cutin deposition in the cell walls of expanding epidermal cells and certain secretory tissues. The protein is Non-specific lipid-transfer protein 3 (LTP3) of Arabidopsis thaliana (Mouse-ear cress).